The sequence spans 445 residues: Alkylglycerol monooxygenase (445 aa).

A run of 2 helical transmembrane segments spans residues 43 to 63 (ATPF…ILKG) and 111 to 131 (WDSP…YYWF). The Fatty acid hydroxylase domain occupies 120–249 (AFLGVDFGYY…LIIWDKIFGT (130 aa)). The Histidine box-1 signature appears at 132 to 136 (HRMAH). The short motif at 145–149 (HQTHH) is the Histidine box-2 element. Residues 221-225 (HRVHH) carry the Histidine box-3 motif. A run of 3 helical transmembrane segments spans residues 334 to 354 (LLKI…EETF), 363 to 383 (VTLL…GFLL), and 413 to 433 (VPSL…FWGV).

Belongs to the sterol desaturase family. TMEM195 subfamily. Fe cation serves as cofactor.

It localises to the endoplasmic reticulum membrane. The enzyme catalyses 1-O-(1,2-saturated-alkyl)-sn-glycerol + (6R)-L-erythro-5,6,7,8-tetrahydrobiopterin + O2 = a 1-(1-hydroxyalkyl)-sn-glycerol + (6R)-L-erythro-6,7-dihydrobiopterin + H2O. Functionally, glyceryl-ether monooxygenase that cleaves the O-alkyl bond of ether lipids. Ether lipids are essential components of brain membranes. In Homo sapiens (Human), this protein is Alkylglycerol monooxygenase (AGMO).